Reading from the N-terminus, the 130-residue chain is UPF0102 protein RSc3265 (130 aa).

It belongs to the UPF0102 family.

This chain is UPF0102 protein RSc3265, found in Ralstonia nicotianae (strain ATCC BAA-1114 / GMI1000) (Ralstonia solanacearum).